We begin with the raw amino-acid sequence, 770 residues long: Conserved oligomeric Golgi complex subunit 7 (770 aa).

The protein belongs to the COG7 family. As to quaternary structure, component of the conserved oligomeric Golgi complex which is composed of eight different subunits and is required for normal Golgi morphology and localization.

The protein localises to the golgi apparatus membrane. Required for normal Golgi function. This Mus musculus (Mouse) protein is Conserved oligomeric Golgi complex subunit 7 (Cog7).